The following is a 262-amino-acid chain: Cytochrome c oxidase subunit 3 (262 aa).

The next 6 membrane-spanning stretches (helical) occupy residues 39 to 59 (YDIS…YQWW), 83 to 103 (GMIL…WAFF), 120 to 140 (MGII…ILLA), 163 to 183 (GLFF…YEYI), 198 to 218 (FFMA…FLLV), and 240 to 260 (AWYW…IYWW).

Belongs to the cytochrome c oxidase subunit 3 family. As to quaternary structure, component of the cytochrome c oxidase (complex IV, CIV), a multisubunit enzyme composed of a catalytic core of 3 subunits and several supernumerary subunits. The complex exists as a monomer or a dimer and forms supercomplexes (SCs) in the inner mitochondrial membrane with ubiquinol-cytochrome c oxidoreductase (cytochrome b-c1 complex, complex III, CIII).

The protein resides in the mitochondrion inner membrane. The enzyme catalyses 4 Fe(II)-[cytochrome c] + O2 + 8 H(+)(in) = 4 Fe(III)-[cytochrome c] + 2 H2O + 4 H(+)(out). In terms of biological role, component of the cytochrome c oxidase, the last enzyme in the mitochondrial electron transport chain which drives oxidative phosphorylation. The respiratory chain contains 3 multisubunit complexes succinate dehydrogenase (complex II, CII), ubiquinol-cytochrome c oxidoreductase (cytochrome b-c1 complex, complex III, CIII) and cytochrome c oxidase (complex IV, CIV), that cooperate to transfer electrons derived from NADH and succinate to molecular oxygen, creating an electrochemical gradient over the inner membrane that drives transmembrane transport and the ATP synthase. Cytochrome c oxidase is the component of the respiratory chain that catalyzes the reduction of oxygen to water. Electrons originating from reduced cytochrome c in the intermembrane space (IMS) are transferred via the dinuclear copper A center (CU(A)) of subunit 2 and heme A of subunit 1 to the active site in subunit 1, a binuclear center (BNC) formed by heme A3 and copper B (CU(B)). The BNC reduces molecular oxygen to 2 water molecules using 4 electrons from cytochrome c in the IMS and 4 protons from the mitochondrial matrix. The protein is Cytochrome c oxidase subunit 3 (mt:CoIII) of Drosophila melanogaster (Fruit fly).